The following is an 83-amino-acid chain: MAFKREIQGVVVKIAGEKTASVLVERKVVHPRYRKIVKRFKKYLIHDERNEVKVGDTVVAVECRPLSKRKSFRLKSVLATGVE.

The protein belongs to the universal ribosomal protein uS17 family. In terms of assembly, part of the 30S ribosomal subunit.

Its function is as follows. One of the primary rRNA binding proteins, it binds specifically to the 5'-end of 16S ribosomal RNA. This chain is Small ribosomal subunit protein uS17, found in Campylobacter jejuni subsp. jejuni serotype O:6 (strain 81116 / NCTC 11828).